An 87-amino-acid chain; its full sequence is UPF0367 protein Pro_0144 (87 aa).

This sequence belongs to the UPF0367 family.

The chain is UPF0367 protein Pro_0144 from Prochlorococcus marinus (strain SARG / CCMP1375 / SS120).